We begin with the raw amino-acid sequence, 416 residues long: UDP-N-acetylglucosamine 1-carboxyvinyltransferase (416 aa).

Position 22 to 23 (22 to 23) interacts with phosphoenolpyruvate; it reads KN. Arg92 is a binding site for UDP-N-acetyl-alpha-D-glucosamine. Cys116 functions as the Proton donor in the catalytic mechanism. Cys116 is modified (2-(S-cysteinyl)pyruvic acid O-phosphothioketal). Residues Asp306 and Ile328 each contribute to the UDP-N-acetyl-alpha-D-glucosamine site.

It belongs to the EPSP synthase family. MurA subfamily.

The protein localises to the cytoplasm. It carries out the reaction phosphoenolpyruvate + UDP-N-acetyl-alpha-D-glucosamine = UDP-N-acetyl-3-O-(1-carboxyvinyl)-alpha-D-glucosamine + phosphate. The protein operates within cell wall biogenesis; peptidoglycan biosynthesis. Functionally, cell wall formation. Adds enolpyruvyl to UDP-N-acetylglucosamine. The chain is UDP-N-acetylglucosamine 1-carboxyvinyltransferase from Buchnera aphidicola subsp. Baizongia pistaciae (strain Bp).